Here is a 351-residue protein sequence, read N- to C-terminus: Probable minor fimbrial subunit LpfD (351 aa).

The N-terminal stretch at 1–22 (MKAAIALSLLGCVFGFSGKAFA) is a signal peptide.

It belongs to the fimbrial protein family.

It localises to the fimbrium. Its function is as follows. Part of the lpfABCC'DE fimbrial operon. LP fimbriae may participate in the interaction with eukaryotic cells by assisting in microcolony formation. This is Probable minor fimbrial subunit LpfD (lpfD) from Escherichia coli O157:H7.